The sequence spans 336 residues: Glucokinase (336 aa).

12–17 (ADIGGT) serves as a coordination point for ATP.

It belongs to the bacterial glucokinase family.

The protein localises to the cytoplasm. It catalyses the reaction D-glucose + ATP = D-glucose 6-phosphate + ADP + H(+). The polypeptide is Glucokinase (Helicobacter acinonychis (strain Sheeba)).